Reading from the N-terminus, the 164-residue chain is MD-2-related lipid-recognition protein 3 (164 aa).

A signal peptide spans 1–24 (MAMSHVQPMLLLLVSLFFLPALRG).

In terms of assembly, interacts with RUB1/NEDD8. Neddylated. Post-translationally, ubiquitinated.

It localises to the vacuole. The protein resides in the endoplasmic reticulum. May be involved in herbivory-mediated responses. May play a role in herbivory-associated molecular pattern (HAMP) recognition. May function is jasmonate (JA) signaling in response to HAMP. May play a role in defense response against the pathogens Altenaria brassicicola and Pseudomonas syringae. In Arabidopsis thaliana (Mouse-ear cress), this protein is MD-2-related lipid-recognition protein 3.